The chain runs to 119 residues: MIIGIGIDIIELNRIEKMLDGKLKFMERILTKNERNVAMELKGSRLTEFVAGRFAAKEAYSKAVGTGIGKEVSFLDIEVKNDERGKPILITSTEYVVHLSISHSKEFAVAQVVLESSSR.

Positions 8 and 58 each coordinate Mg(2+).

Belongs to the P-Pant transferase superfamily. AcpS family. Mg(2+) serves as cofactor.

The protein localises to the cytoplasm. It catalyses the reaction apo-[ACP] + CoA = holo-[ACP] + adenosine 3',5'-bisphosphate + H(+). Functionally, transfers the 4'-phosphopantetheine moiety from coenzyme A to a Ser of acyl-carrier-protein. The chain is Holo-[acyl-carrier-protein] synthase from Bacillus cereus (strain G9842).